The following is a 1875-amino-acid chain: Neuron navigator 1 (1875 aa).

Met-1 carries the post-translational modification N-acetylmethionine. The tract at residues 1–63 is disordered; that stretch reads MLGSSVKSVQ…GGSGSMAKAS (63 aa). Phosphoserine is present on residues Ser-93 and Ser-145. Disordered regions lie at residues 115–230 and 280–339; these read SDDM…EERA and SSLR…VGGS. A Phosphothreonine modification is found at Thr-162. Ser-197 and Ser-202 each carry phosphoserine. The stretch at 258–283 forms a coiled coil; sequence ESQRKRTVQNVLDLRQNLEETMSSLR. Residues 280–291 are compositionally biased toward polar residues; it reads SSLRGSQVTHSS. A phosphoserine mark is found at Ser-299, Ser-311, Ser-315, Ser-365, and Ser-394. Residues 304–318 show a composition bias toward low complexity; sequence PRSVSSLSNRSSPLS. Disordered stretches follow at residues 391–463 and 477–783; these read GYMS…RTDS and SESE…AELP. Low complexity-rich tracts occupy residues 414-428 and 436-456; these read DESS…DASD and NASS…RSST. 4 positions are modified to phosphoserine: Ser-455, Ser-477, Ser-479, and Ser-493. A compositionally biased stretch (basic and acidic residues) spans 479–489; sequence SEEKTPKKLEY. Over residues 506–522 the composition is skewed to basic and acidic residues; sequence ERPESCDDASKGGELKK. Ser-531 is subject to Phosphoserine. Residue Thr-537 is modified to Phosphothreonine. At Ser-544 the chain carries Phosphoserine. Thr-547 carries the post-translational modification Phosphothreonine. The span at 558–569 shows a compositional bias: basic and acidic residues; the sequence is GKPEGKATDKGK. Thr-575 carries the post-translational modification Phosphothreonine. The segment covering 584-594 has biased composition (basic and acidic residues); sequence AGRDRLSDAKK. Composition is skewed to polar residues over residues 618-638 and 648-658; these read GTAT…QKSS and RKTSLDVSNSV. Ser-651 is modified (phosphoserine). Arg-690 carries the post-translational modification Omega-N-methylarginine. Composition is skewed to polar residues over residues 696 to 712 and 726 to 735; these read VSSS…QGGL and GRSTPAPVNQ. Positions 733–758 form a coiled coil; it reads VNQTDREKEKAKAKAVALDSDNISLK. A phosphoserine mark is found at Ser-752, Ser-756, Ser-762, Ser-799, and Ser-810. Residues 753 to 772 show a composition bias toward polar residues; it reads DNISLKSIGSPESTPKNQAS. 2 disordered regions span residues 800–840 and 893–982; these read LANL…PLPS and MSLP…SPPA. Composition is skewed to low complexity over residues 807–818 and 893–902; these read NSNSLDLPSSSD and MSLPSAFPSS. Residue Ser-998 is modified to Phosphoserine. Thr-1004 carries the phosphothreonine modification. A coiled-coil region spans residues 1070–1161; the sequence is SSAEERMQSE…SEAQAVIQGA (92 aa). The residue at position 1168 (Thr-1168) is a Phosphothreonine. 4 disordered regions span residues 1172 to 1202, 1242 to 1306, 1359 to 1381, and 1808 to 1841; these read LRIK…KDAD, ATPD…KEVS, VAPG…LSSP, and KLYH…SLDS. Ser-1179 bears the Phosphoserine mark. Low complexity predominate over residues 1179 to 1198; that stretch reads SSDSISSLNSITSHSSIGSS. Over residues 1244–1259 the composition is skewed to polar residues; it reads PDSSAPSSPKLQHGST. Residues 1260-1281 are compositionally biased toward low complexity; it reads ETASPSIKSSTSSSVGTEVTET. At Ser-1263 the chain carries Phosphoserine. The stretch at 1301–1360 forms a coiled coil; the sequence is EKKEVSELRSELWEKEMKLTDIRLEALNSAHQLDQLRETMHNMQLEVDLLKAENDRLKVA. Polar residues predominate over residues 1365–1381; it reads SGCTPGQVPGSSALSSP. Ser-1380 carries the phosphoserine modification.

It belongs to the Nav/unc-53 family. Interacts with tubulin. As to expression, expressed in heart and brain. Present in brain (at protein level). In adult brain, found almost exclusively in areas of secondary neurogenesis from the hippocampus and the subventricular zone.

The protein resides in the cytoplasm. The protein localises to the cytoskeleton. Functionally, may be involved in neuronal migration. The chain is Neuron navigator 1 (Nav1) from Mus musculus (Mouse).